Here is a 233-residue protein sequence, read N- to C-terminus: tRNA (guanine-N(7)-)-methyltransferase (233 aa).

Residues Glu62, Glu87, Asp116, and Asp138 each contribute to the S-adenosyl-L-methionine site. Asp138 is a catalytic residue. Substrate is bound by residues Lys142, Asp174, and 212–215 (TRYE).

This sequence belongs to the class I-like SAM-binding methyltransferase superfamily. TrmB family.

The catalysed reaction is guanosine(46) in tRNA + S-adenosyl-L-methionine = N(7)-methylguanosine(46) in tRNA + S-adenosyl-L-homocysteine. It participates in tRNA modification; N(7)-methylguanine-tRNA biosynthesis. Catalyzes the formation of N(7)-methylguanine at position 46 (m7G46) in tRNA. This chain is tRNA (guanine-N(7)-)-methyltransferase, found in Bartonella quintana (strain Toulouse) (Rochalimaea quintana).